Here is a 537-residue protein sequence, read N- to C-terminus: Cytochrome P450 734A5 (537 aa).

A helical membrane pass occupies residues 13–33 (GAAAVAVAAAAAWVAVYAAAA). Cysteine 480 contributes to the heme binding site.

It belongs to the cytochrome P450 family. Requires heme as cofactor. As to expression, exclusively expressed in roots.

It is found in the membrane. Functionally, cytochrome P450 probably involved in brassinosteroids (BRs) inactivation and regulation of BRs homeostasis. In Oryza sativa subsp. japonica (Rice), this protein is Cytochrome P450 734A5 (CYP734A5).